The primary structure comprises 171 residues: Adenine phosphoribosyltransferase (171 aa).

This sequence belongs to the purine/pyrimidine phosphoribosyltransferase family. Homodimer.

It is found in the cytoplasm. It carries out the reaction AMP + diphosphate = 5-phospho-alpha-D-ribose 1-diphosphate + adenine. Its pathway is purine metabolism; AMP biosynthesis via salvage pathway; AMP from adenine: step 1/1. Functionally, catalyzes a salvage reaction resulting in the formation of AMP, that is energically less costly than de novo synthesis. The sequence is that of Adenine phosphoribosyltransferase from Halalkalibacterium halodurans (strain ATCC BAA-125 / DSM 18197 / FERM 7344 / JCM 9153 / C-125) (Bacillus halodurans).